The following is a 61-amino-acid chain: Double gene block protein 1 (61 aa).

Residues 15 to 45 (LAGNRGKQKTRRSVAKDAIRKPASDSTNGGN) are disordered. The interval 17–35 (GNRGKQKTRRSVAKDAIRK) is RNA-binding. Over residues 28–37 (VAKDAIRKPA) the composition is skewed to basic and acidic residues.

This sequence belongs to the carmovirus double gene block protein 1 family. In terms of assembly, homodimer.

Functionally, cell-to-cell movement. Displays RNA-binding activity. This is Double gene block protein 1 from Carnation mottle virus (isolate China/Shanghai) (CarMV).